The following is a 357-amino-acid chain: Protein pelota homolog (357 aa).

Belongs to the eukaryotic release factor 1 family. Pelota subfamily. As to quaternary structure, monomer. Requires a divalent metal cation as cofactor.

Its subcellular location is the cytoplasm. In terms of biological role, may function in recognizing stalled ribosomes, interact with stem-loop structures in stalled mRNA molecules, and effect endonucleolytic cleavage of the mRNA. May play a role in the release non-functional ribosomes and degradation of damaged mRNAs. Has endoribonuclease activity. This is Protein pelota homolog from Thermococcus gammatolerans (strain DSM 15229 / JCM 11827 / EJ3).